Consider the following 229-residue polypeptide: Potassium/proton antiporter CemA (229 aa).

2 consecutive transmembrane segments (helical) span residues 114 to 134 (IIYF…LIIL) and 189 to 209 (IISG…KYWI).

This sequence belongs to the CemA family.

Its subcellular location is the plastid. It localises to the chloroplast inner membrane. The catalysed reaction is K(+)(in) + H(+)(out) = K(+)(out) + H(+)(in). Contributes to K(+)/H(+) antiport activity by supporting proton efflux to control proton extrusion and homeostasis in chloroplasts in a light-dependent manner to modulate photosynthesis. Prevents excessive induction of non-photochemical quenching (NPQ) under continuous-light conditions. Indirectly promotes efficient inorganic carbon uptake into chloroplasts. This chain is Potassium/proton antiporter CemA, found in Lotus japonicus (Lotus corniculatus var. japonicus).